The sequence spans 2323 residues: C2 domain-containing protein 3 (2323 aa).

Disordered stretches follow at residues 1 to 27 (MKQR…SPST), 193 to 215 (RELR…SCRG), 402 to 426 (WNGL…DLND), 444 to 509 (SDVG…HTPA), 537 to 556 (PDSP…PPKP), and 698 to 745 (KLSS…TKKT). A compositionally biased stretch (polar residues) spans 200–209 (ESSNTQSMIP). The residue at position 453 (Ser453) is a Phosphoserine. Residues 474-483 (KVVESKEQKQ) are compositionally biased toward basic and acidic residues. Residues 504 to 663 (PGHTPAMSLS…IQSELLSFSS (160 aa)) enclose the C2 1 domain. The span at 698–735 (KLSSSTQPAPVSAATSSDTILPETGQDTACTRNPQSSN) shows a compositional bias: polar residues. Ser713 is modified (phosphoserine). 4 consecutive C2 domains span residues 771-903 (SCNL…SRLL), 969-1131 (QPPV…YRED), 1155-1323 (SSGF…TGWY), and 1383-1517 (KEEE…TLTI). Basic and acidic residues predominate over residues 1550–1574 (EPARELDSMDCSSHSESEQHPRKSD). Disordered stretches follow at residues 1550–1599 (EPAR…NSAA) and 1798–1824 (LAHT…AARH). Residues 1584-1599 (LQTSPTSTQVHGNSAA) are compositionally biased toward polar residues. The 129-residue stretch at 1598–1726 (AAAQVCPAQE…SGFQFICGWY (129 aa)) folds into the C2 6 domain. Ser1871 carries the phosphoserine modification. Disordered stretches follow at residues 1891–1918 (FSSQ…GRQD), 1952–2013 (ALTS…GGML), 2074–2163 (SEVL…SVGW), 2182–2231 (SEAF…EVST), and 2261–2323 (SHSP…TEET). Positions 1892–1904 (SSQSSPAVSQSQE) are enriched in low complexity. Polar residues-rich tracts occupy residues 1952–1965 (ALTS…SRAV) and 2074–2083 (SEVLSPQPTE). The segment covering 2110 to 2125 (AVSPQPAQGSPSQSGV) has biased composition (low complexity). Over residues 2147 to 2158 (PSLTFSEAQEGS) the composition is skewed to polar residues. Residues 2182 to 2197 (SEAFSSEFSDSSESFE) are compositionally biased toward low complexity. Residues 2207-2216 (SKREDYKDSP) are compositionally biased toward basic and acidic residues. Over residues 2222 to 2231 (QVPTGSEVST) the composition is skewed to polar residues.

In terms of assembly, interacts with OFD1; OFD1 may act as a negative regulator of C2CD3. Associates with the BBSome complex. Interacts with IFT88, BBS4 and PCM1.

The protein localises to the cytoplasm. It localises to the cytoskeleton. Its subcellular location is the cilium basal body. The protein resides in the microtubule organizing center. It is found in the centrosome. The protein localises to the centriole. In terms of biological role, component of the centrioles that acts as a positive regulator of centriole elongation. Promotes assembly of centriolar distal appendage, a structure at the distal end of the mother centriole that acts as an anchor of the cilium, and is required for recruitment of centriolar distal appendages proteins CEP83, SCLT1, CEP89, FBF1 and CEP164. Not required for centriolar satellite integrity or RAB8 activation. Required for primary cilium formation. Required for sonic hedgehog/SHH signaling and for proteolytic processing of GLI3. This Mus musculus (Mouse) protein is C2 domain-containing protein 3 (C2cd3).